Reading from the N-terminus, the 213-residue chain is Uracil phosphoribosyltransferase (213 aa).

5-phospho-alpha-D-ribose 1-diphosphate is bound by residues arginine 78, arginine 103, and 130 to 138 (DPMLATGGS). Uracil-binding positions include isoleucine 197 and 202–204 (GDA). Aspartate 203 provides a ligand contact to 5-phospho-alpha-D-ribose 1-diphosphate.

This sequence belongs to the UPRTase family. The cofactor is Mg(2+).

It carries out the reaction UMP + diphosphate = 5-phospho-alpha-D-ribose 1-diphosphate + uracil. It functions in the pathway pyrimidine metabolism; UMP biosynthesis via salvage pathway; UMP from uracil: step 1/1. Allosterically activated by GTP. In terms of biological role, catalyzes the conversion of uracil and 5-phospho-alpha-D-ribose 1-diphosphate (PRPP) to UMP and diphosphate. The chain is Uracil phosphoribosyltransferase from Cutibacterium acnes (strain DSM 16379 / KPA171202) (Propionibacterium acnes).